A 412-amino-acid chain; its full sequence is Serine hydroxymethyltransferase (412 aa).

(6S)-5,6,7,8-tetrahydrofolate-binding positions include Leu-117 and 121–123 (GHL). Lys-226 is subject to N6-(pyridoxal phosphate)lysine.

This sequence belongs to the SHMT family. Homodimer. It depends on pyridoxal 5'-phosphate as a cofactor.

Its subcellular location is the cytoplasm. It catalyses the reaction (6R)-5,10-methylene-5,6,7,8-tetrahydrofolate + glycine + H2O = (6S)-5,6,7,8-tetrahydrofolate + L-serine. Its pathway is one-carbon metabolism; tetrahydrofolate interconversion. The protein operates within amino-acid biosynthesis; glycine biosynthesis; glycine from L-serine: step 1/1. Functionally, catalyzes the reversible interconversion of serine and glycine with tetrahydrofolate (THF) serving as the one-carbon carrier. This reaction serves as the major source of one-carbon groups required for the biosynthesis of purines, thymidylate, methionine, and other important biomolecules. Also exhibits THF-independent aldolase activity toward beta-hydroxyamino acids, producing glycine and aldehydes, via a retro-aldol mechanism. This chain is Serine hydroxymethyltransferase, found in Staphylococcus epidermidis (strain ATCC 35984 / DSM 28319 / BCRC 17069 / CCUG 31568 / BM 3577 / RP62A).